The primary structure comprises 616 residues: Bifunctional 2-aminoethylphosphonate cytidylyltransferase/aminotransferase (616 aa).

Residues Met-1–Glu-240 form a 2-aminoethylphosphonate cytidylyltransferase region. CMP-(2-aminoethyl)phosphonate contacts are provided by Leu-8, Gly-10, Gly-11, Lys-25, Thr-83, Thr-88, Glu-104, and Ser-105. Mg(2+)-binding residues include Asp-106 and Asp-136. Residues Asp-136, Lys-153, and Glu-196 each contribute to the CMP-(2-aminoethyl)phosphonate site. Mg(2+)-binding residues include Glu-220 and Asp-222. The segment at Glu-250–Val-616 is 2-aminoethylphosphonate aminotransferase. Residues Ser-313, Gly-314, Thr-315, Thr-390, Lys-441, and Thr-490 each coordinate pyridoxal 5'-phosphate.

It in the N-terminal section; belongs to the LicC/PntC cytidylyltransferase family. The protein in the C-terminal section; belongs to the class-V pyridoxal-phosphate-dependent aminotransferase family. PhnW subfamily. As to quaternary structure, homodimer. It depends on Mg(2+) as a cofactor. The cofactor is Zn(2+). Requires pyridoxal 5'-phosphate as cofactor.

The enzyme catalyses (2-aminoethyl)phosphonate + CTP = CMP-(2-aminoethyl)phosphonate + diphosphate. It catalyses the reaction (2-aminoethyl)phosphonate + pyruvate = phosphonoacetaldehyde + L-alanine. It functions in the pathway phosphorus metabolism; phosphonate biosynthesis. Its activity is regulated as follows. Cytidylyltransferase activity is inhibited in the presence of EDTA and is restored by the addition of Mg(2+) or Zn(2+). Bifunctional transferase involved in the biosynthesis of cell-surface phosphonates. The aminotransferase region catalyzes the transformation of phosphonoacetaldehyde (PnAA) to 2-aminoethylphosphonate (AEP). The cytidylyltransferase region catalyzes the activation of 2-aminoethylphosphonate (AEP) to CMP-2-aminoethylphosphonate (CMP-AEP). Cannot use phosphocholine. Exhibits strong activity towards CTP, limited activity towards ATP and no activity with GTP. In Treponema denticola (strain ATCC 35405 / DSM 14222 / CIP 103919 / JCM 8153 / KCTC 15104), this protein is Bifunctional 2-aminoethylphosphonate cytidylyltransferase/aminotransferase.